A 692-amino-acid polypeptide reads, in one-letter code: ABC1 family protein C21C3.03, mitochondrial (692 aa).

The N-terminal 91 residues, 1-91 (MISFSHWNSH…RKFTTRQKSE (91 aa)), are a transit peptide targeting the mitochondrion. The next 2 helical transmembrane spans lie at 96–116 (WRIL…LWIL) and 161–181 (LFII…ISFL).

It belongs to the protein kinase superfamily. ADCK protein kinase family.

It is found in the mitochondrion membrane. The sequence is that of ABC1 family protein C21C3.03, mitochondrial from Schizosaccharomyces pombe (strain 972 / ATCC 24843) (Fission yeast).